We begin with the raw amino-acid sequence, 169 residues long: Cell division inhibitor SulA (169 aa).

The tract at residues 1 to 22 (MHTSIYANRSTSFSPSAGNDTQ) is disordered. Residues 106 to 112 (ALRTGNY) are ftsZ binding. Residues 162–169 (KIHSNLYH) form a lon protease binding region.

This sequence belongs to the SulA family. Interacts with FtsZ. Is rapidly cleaved and degraded by the Lon protease once DNA damage is repaired.

Its function is as follows. Component of the SOS system and an inhibitor of cell division. Accumulation of SulA causes rapid cessation of cell division and the appearance of long, non-septate filaments. In the presence of GTP, binds a polymerization-competent form of FtsZ in a 1:1 ratio, thus inhibiting FtsZ polymerization and therefore preventing it from participating in the assembly of the Z ring. This mechanism prevents the premature segregation of damaged DNA to daughter cells during cell division. This chain is Cell division inhibitor SulA, found in Enterobacter sp. (strain 638).